The sequence spans 425 residues: Histidine--tRNA ligase (425 aa).

Belongs to the class-II aminoacyl-tRNA synthetase family. As to quaternary structure, homodimer.

Its subcellular location is the cytoplasm. It carries out the reaction tRNA(His) + L-histidine + ATP = L-histidyl-tRNA(His) + AMP + diphosphate + H(+). The chain is Histidine--tRNA ligase from Listeria monocytogenes serotype 4b (strain F2365).